We begin with the raw amino-acid sequence, 217 residues long: Putative 8-oxo-dGTP diphosphatase 3 (217 aa).

Residues 30 to 164 (GRYGAAGLLL…PGFAASWQRL (135 aa)) enclose the Nudix hydrolase domain. Residues 67–92 (LPGGARDSHETPEQTAVRESSEEAGL) are disordered. Positions 70, 85, 88, and 89 each coordinate Mg(2+). The Nudix box signature appears at 70-91 (GARDSHETPEQTAVRESSEEAG).

Belongs to the Nudix hydrolase family. Requires Mg(2+) as cofactor. Mn(2+) serves as cofactor.

The enzyme catalyses 8-oxo-dGTP + H2O = 8-oxo-dGMP + diphosphate + H(+). In terms of biological role, may be involved in the GO system responsible for removing an oxidatively damaged form of guanine (7,8-dihydro-8-oxoguanine, 8-oxo-dGTP) from DNA and the nucleotide pool. 8-oxo-dGTP is inserted opposite dA and dC residues of template DNA with almost equal efficiency thus leading to A.T to G.C transversions. MutT specifically degrades 8-oxo-dGTP to the monophosphate. This chain is Putative 8-oxo-dGTP diphosphatase 3 (mutT3), found in Mycobacterium tuberculosis (strain CDC 1551 / Oshkosh).